The primary structure comprises 165 residues: Nucleotide-binding protein Ccon26_01810 (165 aa).

The protein belongs to the YajQ family.

Functionally, nucleotide-binding protein. In Campylobacter concisus (strain 13826), this protein is Nucleotide-binding protein Ccon26_01810.